A 125-amino-acid polypeptide reads, in one-letter code: Small ribosomal subunit protein bS6 (125 aa).

The segment at 96-125 (VTEASPMKAAKEERKPLAEVENNDFEDAEE) is disordered. The segment covering 104–113 (AAKEERKPLA) has biased composition (basic and acidic residues). Residues 116–125 (ENNDFEDAEE) are compositionally biased toward acidic residues.

Belongs to the bacterial ribosomal protein bS6 family.

Its function is as follows. Binds together with bS18 to 16S ribosomal RNA. The chain is Small ribosomal subunit protein bS6 from Haemophilus influenzae (strain 86-028NP).